The chain runs to 213 residues: 3-oxoadipate CoA-transferase subunit B (213 aa).

Glu-50 is a catalytic residue.

It belongs to the 3-oxoacid CoA-transferase subunit B family. As to quaternary structure, heterodimer.

It catalyses the reaction 3-oxoadipate + succinyl-CoA = 3-oxoadipyl-CoA + succinate. It participates in aromatic compound metabolism; beta-ketoadipate pathway; acetyl-CoA and succinyl-CoA from 3-oxoadipate: step 1/2. This Pseudomonas putida (strain ATCC 47054 / DSM 6125 / CFBP 8728 / NCIMB 11950 / KT2440) protein is 3-oxoadipate CoA-transferase subunit B (pcaJ).